A 92-amino-acid polypeptide reads, in one-letter code: MANLTGTIKGLYPETLSPEQLEKLRGFKIQTRITNEKYLRTHKEVELLISGFFREMFLKRPDNIPEFAADYFTDPRLPNKIHMQLIKEKKAA.

An RIIa domain is found at 43-77 (KEVELLISGFFREMFLKRPDNIPEFAADYFTDPRL).

In Bos taurus (Bovine), this protein is RIIa domain-containing protein 1 (RIIAD1).